A 377-amino-acid polypeptide reads, in one-letter code: Nitric oxide reductase FlRd-NAD(+) reductase (377 aa).

It belongs to the FAD-dependent oxidoreductase family. FAD is required as a cofactor.

The protein resides in the cytoplasm. The catalysed reaction is 2 reduced [nitric oxide reductase rubredoxin domain] + NAD(+) + H(+) = 2 oxidized [nitric oxide reductase rubredoxin domain] + NADH. It functions in the pathway nitrogen metabolism; nitric oxide reduction. Functionally, one of at least two accessory proteins for anaerobic nitric oxide (NO) reductase. Reduces the rubredoxin moiety of NO reductase. This chain is Nitric oxide reductase FlRd-NAD(+) reductase, found in Salmonella heidelberg (strain SL476).